A 419-amino-acid chain; its full sequence is MLSQFPGQCSNNVFCFPPIESETKNGKKASWIICVQVMQHNTILPITDEMFSTDVKDAVAEIFTKFFVEEGAVRISKTTRVTEGKNLGKKNATTVVHQAFKDALSKYNRHARQKRGAHTNRGMIPPMLVKYFNIIPKTFFEEETDPIVHGKRNGVRAVACQQGDGSILLYSRTEKEFLGLDNIKKELKQLYLFIDVRVYLDGELYLHRKPLQWIAGQANAKADSSELHFYVFDCFWSDQLQMPSNKRQQLLTNIFKQKEDLTFIHQVENFSVKNEDEALRLKTQFIKEGYEGAIVRNANGPYEPGYNNYHSPHLAKLKPLLDAEFILVDYTQGKKGKDLGAILWVCELPNKKRFVVTPKHLTYADRYALFQKLTPALFKKHLYGKELTVEYAELSPKTGIPLQARAVGFREPINVLEII.

The interval methionine 1–asparagine 120 is NTD. Residues arginine 121–leucine 317 are AD domain. 4 residues coordinate ATP: histidine 149, lysine 151, glutamate 203, and phenylalanine 232. The active-site N6-AMP-lysine intermediate is the lysine 151. Residue glutamate 203 coordinates a divalent metal cation. An a divalent metal cation-binding site is contributed by glutamate 291. Positions 294 and 316 each coordinate ATP. Positions lysine 318–isoleucine 419 are OB domain.

This sequence belongs to the ATP-dependent DNA ligase family. A divalent metal cation is required as a cofactor.

Its subcellular location is the virion. The catalysed reaction is ATP + (deoxyribonucleotide)n-3'-hydroxyl + 5'-phospho-(deoxyribonucleotide)m = (deoxyribonucleotide)n+m + AMP + diphosphate.. Its function is as follows. Very low-fidelity DNA ligase that seals nicks in double-stranded DNA during DNA repair. Together with the viral repair DNA polymerase X, fills the single nucleotide gaps generated by the AP endonuclease. It is not essential for viral replication and recombination. Displays a very low adenylation activity towards DNA with 3'-dideoxy- or 3'-amino-terminated nicks compared to regular nick DNA. The chain is DNA ligase (LIG) from Ornithodoros (relapsing fever ticks).